Reading from the N-terminus, the 306-residue chain is UDP-3-O-acyl-N-acetylglucosamine deacetylase (306 aa).

Zn(2+) is bound by residues His79, His238, and Asp242. The active-site Proton donor is the His265.

This sequence belongs to the LpxC family. Zn(2+) serves as cofactor.

It catalyses the reaction a UDP-3-O-[(3R)-3-hydroxyacyl]-N-acetyl-alpha-D-glucosamine + H2O = a UDP-3-O-[(3R)-3-hydroxyacyl]-alpha-D-glucosamine + acetate. It participates in glycolipid biosynthesis; lipid IV(A) biosynthesis; lipid IV(A) from (3R)-3-hydroxytetradecanoyl-[acyl-carrier-protein] and UDP-N-acetyl-alpha-D-glucosamine: step 2/6. In terms of biological role, catalyzes the hydrolysis of UDP-3-O-myristoyl-N-acetylglucosamine to form UDP-3-O-myristoylglucosamine and acetate, the committed step in lipid A biosynthesis. This is UDP-3-O-acyl-N-acetylglucosamine deacetylase from Shewanella sediminis (strain HAW-EB3).